The chain runs to 396 residues: Nucleolar protein 12 (396 aa).

Residues 43–104 form a disordered region; it reads TDKDADGDEK…GKESKKSTKE (62 aa). Over residues 47-58 the composition is skewed to acidic residues; it reads ADGDEKMEDAAS. The segment covering 64–73 has biased composition (basic residues); it reads KKPSKKKLAK. The span at 87–104 shows a compositional bias: basic and acidic residues; that stretch reads EPEKLVEEGKESKKSTKE. RRM domains are found at residues 112-220 and 228-312; these read RTIF…SITH and RSVF…RCKN. The segment at 361–396 is disordered; sequence TKDDSKPVLKKGKKERSKTGRVTKRSQAFKKSQQKK. The segment covering 368-396 has biased composition (basic residues); sequence VLKKGKKERSKTGRVTKRSQAFKKSQQKK.

Belongs to the RRM RBM34 family.

It localises to the nucleus. The protein localises to the nucleolus. Functionally, involved in pre-25S rRNA processing. The sequence is that of Nucleolar protein 12 (NOP12) from Candida glabrata (strain ATCC 2001 / BCRC 20586 / JCM 3761 / NBRC 0622 / NRRL Y-65 / CBS 138) (Yeast).